The following is a 244-amino-acid chain: Orotidine 5'-phosphate decarboxylase (244 aa).

Residues Asp20, Lys42, 70–79, Thr125, Arg186, Gln195, Gly215, and Arg216 contribute to the substrate site; that span reads DLKFFDIPAT. Residue Lys72 is the Proton donor of the active site.

The protein belongs to the OMP decarboxylase family. Type 1 subfamily. In terms of assembly, homodimer.

The catalysed reaction is orotidine 5'-phosphate + H(+) = UMP + CO2. It participates in pyrimidine metabolism; UMP biosynthesis via de novo pathway; UMP from orotate: step 2/2. In terms of biological role, catalyzes the decarboxylation of orotidine 5'-monophosphate (OMP) to uridine 5'-monophosphate (UMP). The protein is Orotidine 5'-phosphate decarboxylase of Xylella fastidiosa (strain M12).